The following is a 603-amino-acid chain: Probable lysosomal cobalamin transporter (603 aa).

Helical transmembrane passes span 13–33, 50–70, 99–119, 150–170, 201–221, 318–338, 353–373, 381–401, and 422–442; these read IWVA…ITVF, IVSL…IALV, IVYY…IPFA, IAFI…PTAA, LLMT…LALL, LFGG…MLIT, GYIL…VKAA, ILMA…IASV, and ALLI…YAVV. A glycan (N-linked (GlcNAc...) asparagine) is linked at N509. Residues 512-532 form a helical membrane-spanning segment; the sequence is VFGAIDFWAQFAFLTVFLLVF. The N-linked (GlcNAc...) asparagine glycan is linked to N543. Residues 578-603 are disordered; it reads AKRTVGGHPNGQGYGTSGTNGTASSR. The segment covering 585–595 has biased composition (gly residues); it reads HPNGQGYGTSG. N597 carries N-linked (GlcNAc...) asparagine glycosylation.

This sequence belongs to the LIMR family. LMBRD1 subfamily.

Its subcellular location is the lysosome membrane. Its function is as follows. Probable lysosomal cobalamin transporter. Required to export cobalamin from lysosomes allowing its conversion to cofactors. In Neurospora crassa (strain ATCC 24698 / 74-OR23-1A / CBS 708.71 / DSM 1257 / FGSC 987), this protein is Probable lysosomal cobalamin transporter.